Consider the following 401-residue polypeptide: Tetracycline resistance protein, class B (401 aa).

Over 1–6 (MNSSTK) the chain is Cytoplasmic. Residues 7–30 (IALVITLLDAMGIGLIMPVLPTLL) form a helical membrane-spanning segment. Residues 31 to 42 (REFIASEDIANH) are Periplasmic-facing. The helical transmembrane segment at 43-61 (FGVLLALYALMQVIFAPWL) threads the bilayer. The Cytoplasmic segment spans residues 62-71 (GKMSDRFGRR). A helical membrane pass occupies residues 72 to 91 (PVLLLSLIGASLDYLLLAFS). Residues 92–98 (SALWMLY) are Periplasmic-facing. A helical membrane pass occupies residues 99 to 119 (LGRLLSGITGATGAVAASVIA). Residues 120 to 129 (DTTSASQRVK) lie on the Cytoplasmic side of the membrane. Residues 130-152 (WFGWLGASFGLGLIAGPIIGGFA) traverse the membrane as a helical segment. Residues 153-158 (GEISPH) are Periplasmic-facing. A helical membrane pass occupies residues 159-178 (SPFFIAALLNIVTFLVVMFW). Residues 179–211 (FRETKNTRDNTDTEVGVETQSNSVYITLFKTMP) lie on the Cytoplasmic side of the membrane. A helical transmembrane segment spans residues 212-232 (ILLIIYFSAQLIGQIPATVWV). The Periplasmic portion of the chain corresponds to 233–243 (LFTENRFGWNS). Residues 244 to 265 (MMVGFSLAGLGLLHSVFQAFVA) form a helical membrane-spanning segment. Topologically, residues 266 to 275 (GRIATKWGEK) are cytoplasmic. Residues 276-295 (TAVLLGFIADSSAFAFLAFI) form a helical membrane-spanning segment. The Periplasmic segment spans residues 296–298 (SEG). The helical transmembrane segment at 299-322 (WLVFPVLILLAGGGIALPALQGVM) threads the bilayer. At 323 to 332 (SIQTKSHQQG) the chain is on the cytoplasmic side. Residues 333–356 (ALQGLLVSLTNATGVIGPLLFAVI) traverse the membrane as a helical segment. Over 357-365 (YNHSLPIWD) the chain is Periplasmic. Residues 366–387 (GWIWIIGLAFYCIIILLSMTFM) form a helical membrane-spanning segment. Residues 388–401 (LTPQAQGSKQETSA) lie on the Cytoplasmic side of the membrane.

It belongs to the major facilitator superfamily. TCR/Tet family.

Its subcellular location is the cell inner membrane. Its function is as follows. Resistance to tetracycline by an active tetracycline efflux. This is an energy-dependent process that decreases the accumulation of the antibiotic in whole cells. This protein functions as a metal-tetracycline/H(+) antiporter. The polypeptide is Tetracycline resistance protein, class B (tetA) (Escherichia coli).